The chain runs to 123 residues: Large ribosomal subunit protein bL19 (123 aa).

The protein belongs to the bacterial ribosomal protein bL19 family.

Functionally, this protein is located at the 30S-50S ribosomal subunit interface and may play a role in the structure and function of the aminoacyl-tRNA binding site. This Bdellovibrio bacteriovorus (strain ATCC 15356 / DSM 50701 / NCIMB 9529 / HD100) protein is Large ribosomal subunit protein bL19.